A 406-amino-acid chain; its full sequence is Probable endo-xylogalacturonan hydrolase A (406 aa).

The signal sequence occupies residues 1 to 18; sequence MISLNSIFLLSLVGLSRA. Positions 20–49 are disordered; sequence PSRSETSPDRTIKPRAACTPTAGGSSSTDD. PbH1 repeat units lie at residues 183-213, 214-235, 237-257, 266-289, 299-320, and 368-390; these read TSNA…DIGA, STYV…AFKP, ANYV…SVGS, VQNV…KTYP, VKNA…QIQS, and TCDV…ILCG. Asp-228 (proton donor) is an active-site residue. The N-linked (GlcNAc...) asparagine glycan is linked to Asn-244. His-251 is an active-site residue. N-linked (GlcNAc...) asparagine glycosylation is found at Asn-273, Asn-278, and Asn-301.

Belongs to the glycosyl hydrolase 28 family.

It is found in the secreted. Functionally, pectinolytic enzyme involved in the degradation of xylogalacturonan (xga), a galacturonan backbone heavily substituted with xylose, and which is one important component of the hairy regions of pectin. Activity requires a galacturonic acid backbone substituted with xylose. The chain is Probable endo-xylogalacturonan hydrolase A (xghA) from Aspergillus oryzae (strain ATCC 42149 / RIB 40) (Yellow koji mold).